The primary structure comprises 79 residues: Exodeoxyribonuclease 7 small subunit (79 aa).

The protein belongs to the XseB family. Heterooligomer composed of large and small subunits.

It is found in the cytoplasm. The catalysed reaction is Exonucleolytic cleavage in either 5'- to 3'- or 3'- to 5'-direction to yield nucleoside 5'-phosphates.. Functionally, bidirectionally degrades single-stranded DNA into large acid-insoluble oligonucleotides, which are then degraded further into small acid-soluble oligonucleotides. This chain is Exodeoxyribonuclease 7 small subunit, found in Lactococcus lactis subsp. cremoris (strain SK11).